Here is a 146-residue protein sequence, read N- to C-terminus: UPF0178 protein OB0454 (146 aa).

This sequence belongs to the UPF0178 family.

The chain is UPF0178 protein OB0454 from Oceanobacillus iheyensis (strain DSM 14371 / CIP 107618 / JCM 11309 / KCTC 3954 / HTE831).